Reading from the N-terminus, the 570-residue chain is Periplasmic trehalase (570 aa).

A signal peptide spans methionine 1–alanine 34. Residues arginine 159, tryptophan 166–aspartate 167, asparagine 203, arginine 212–glutamine 214, arginine 284–glutamate 286, and glycine 317 contribute to the substrate site. Catalysis depends on proton donor/acceptor residues aspartate 319 and glutamate 503. Glutamate 518 provides a ligand contact to substrate. The segment at lysine 544 to glutamine 570 is disordered. A compositionally biased stretch (low complexity) spans proline 554–glutamine 570.

Belongs to the glycosyl hydrolase 37 family. As to quaternary structure, monomer.

The protein localises to the periplasm. It catalyses the reaction alpha,alpha-trehalose + H2O = alpha-D-glucose + beta-D-glucose. Functionally, provides the cells with the ability to utilize trehalose at high osmolarity by splitting it into glucose molecules that can subsequently be taken up by the phosphotransferase-mediated uptake system. This chain is Periplasmic trehalase, found in Salmonella newport (strain SL254).